We begin with the raw amino-acid sequence, 123 residues long: uncharacterized protein (123 aa).

Over residues 1–12 (MALNNVSLSSGD) the composition is skewed to polar residues. 2 disordered regions span residues 1–25 (MALN…SHGD) and 53–91 (PRQA…RFSP). Basic and acidic residues predominate over residues 61–82 (VRAESRRVDGGGRSPREPDGRG).

This is an uncharacterized protein from Homo sapiens (Human).